Reading from the N-terminus, the 384-residue chain is Putative exopolyphosphatase (384 aa).

5 residues coordinate Mn(2+): D40, D42, D116, H138, and D200.

This sequence belongs to the PPase class C family. It depends on Mn(2+) as a cofactor.

The catalysed reaction is [phosphate](n) + H2O = [phosphate](n-1) + phosphate + H(+). Functionally, degradation of inorganic polyphosphates. This is Putative exopolyphosphatase from Schizosaccharomyces pombe (strain 972 / ATCC 24843) (Fission yeast).